Consider the following 603-residue polypeptide: Proline--tRNA ligase (603 aa).

This sequence belongs to the class-II aminoacyl-tRNA synthetase family. ProS type 1 subfamily. Homodimer.

The protein resides in the cytoplasm. The catalysed reaction is tRNA(Pro) + L-proline + ATP = L-prolyl-tRNA(Pro) + AMP + diphosphate. Its function is as follows. Catalyzes the attachment of proline to tRNA(Pro) in a two-step reaction: proline is first activated by ATP to form Pro-AMP and then transferred to the acceptor end of tRNA(Pro). As ProRS can inadvertently accommodate and process non-cognate amino acids such as alanine and cysteine, to avoid such errors it has two additional distinct editing activities against alanine. One activity is designated as 'pretransfer' editing and involves the tRNA(Pro)-independent hydrolysis of activated Ala-AMP. The other activity is designated 'posttransfer' editing and involves deacylation of mischarged Ala-tRNA(Pro). The misacylated Cys-tRNA(Pro) is not edited by ProRS. The sequence is that of Proline--tRNA ligase from Arthrobacter sp. (strain FB24).